A 297-amino-acid chain; its full sequence is N-acetylneuraminate lyase (297 aa).

The aceneuramate site is built by serine 47 and threonine 48. The Proton donor role is filled by tyrosine 137. Catalysis depends on lysine 165, which acts as the Schiff-base intermediate with substrate. Aceneuramate-binding residues include threonine 167, glycine 189, aspartate 191, glutamate 192, and serine 208.

Belongs to the DapA family. NanA subfamily. As to quaternary structure, homotetramer.

The protein localises to the cytoplasm. It catalyses the reaction aceneuramate = aldehydo-N-acetyl-D-mannosamine + pyruvate. The protein operates within amino-sugar metabolism; N-acetylneuraminate degradation; D-fructose 6-phosphate from N-acetylneuraminate: step 1/5. Its function is as follows. Catalyzes the reversible aldol cleavage of N-acetylneuraminic acid (sialic acid; Neu5Ac) to form pyruvate and N-acetylmannosamine (ManNAc) via a Schiff base intermediate. The polypeptide is N-acetylneuraminate lyase (Escherichia fergusonii (strain ATCC 35469 / DSM 13698 / CCUG 18766 / IAM 14443 / JCM 21226 / LMG 7866 / NBRC 102419 / NCTC 12128 / CDC 0568-73)).